The following is a 70-amino-acid chain: Cytochrome c oxidase subunit 8B, mitochondrial (70 aa).

The transit peptide at 1 to 24 (MPRLPPILRLLQAPAKFTVVPKAH) directs the protein to the mitochondrion. Topologically, residues 25–38 (VSAKPAKTPTSAVE) are mitochondrial matrix. A helical transmembrane segment spans residues 39–60 (QAVGISAIVVGFMVPAGWVLAH). At 61-70 (LESYKKSSAA) the chain is on the mitochondrial intermembrane side.

Belongs to the cytochrome c oxidase VIII family. Component of the cytochrome c oxidase (complex IV, CIV), a multisubunit enzyme composed of 14 subunits. The complex is composed of a catalytic core of 3 subunits MT-CO1, MT-CO2 and MT-CO3, encoded in the mitochondrial DNA, and 11 supernumerary subunits COX4I, COX5A, COX5B, COX6A, COX6B, COX6C, COX7A, COX7B, COX7C, COX8 and NDUFA4, which are encoded in the nuclear genome. The complex exists as a monomer or a dimer and forms supercomplexes (SCs) in the inner mitochondrial membrane with NADH-ubiquinone oxidoreductase (complex I, CI) and ubiquinol-cytochrome c oxidoreductase (cytochrome b-c1 complex, complex III, CIII), resulting in different assemblies (supercomplex SCI(1)III(2)IV(1) and megacomplex MCI(2)III(2)IV(2)).

Its subcellular location is the mitochondrion inner membrane. Its pathway is energy metabolism; oxidative phosphorylation. Its function is as follows. Component of the cytochrome c oxidase, the last enzyme in the mitochondrial electron transport chain which drives oxidative phosphorylation. The respiratory chain contains 3 multisubunit complexes succinate dehydrogenase (complex II, CII), ubiquinol-cytochrome c oxidoreductase (cytochrome b-c1 complex, complex III, CIII) and cytochrome c oxidase (complex IV, CIV), that cooperate to transfer electrons derived from NADH and succinate to molecular oxygen, creating an electrochemical gradient over the inner membrane that drives transmembrane transport and the ATP synthase. Cytochrome c oxidase is the component of the respiratory chain that catalyzes the reduction of oxygen to water. Electrons originating from reduced cytochrome c in the intermembrane space (IMS) are transferred via the dinuclear copper A center (CU(A)) of subunit 2 and heme A of subunit 1 to the active site in subunit 1, a binuclear center (BNC) formed by heme A3 and copper B (CU(B)). The BNC reduces molecular oxygen to 2 water molecules using 4 electrons from cytochrome c in the IMS and 4 protons from the mitochondrial matrix. In Mus musculus (Mouse), this protein is Cytochrome c oxidase subunit 8B, mitochondrial (Cox8b).